Here is a 930-residue protein sequence, read N- to C-terminus: Polypeptide N-acetylgalactosaminyltransferase 5 (930 aa).

Residues 1-12 lie on the Cytoplasmic side of the membrane; that stretch reads MNKIRKFFRGSG. The helical; Signal-anchor for type II membrane protein transmembrane segment at 13–35 threads the bilayer; it reads RVLAFIFAASVIWLLFDMAALRL. Residues 36 to 930 are Lumenal-facing; it reads SFSEINAGLL…KWKFEKYYEV (895 aa). Residues 190–209 form a disordered region; the sequence is KQEAPQNYNVSSDTSKQASE. Polar residues predominate over residues 193-209; sequence APQNYNVSSDTSKQASE. 3 N-linked (GlcNAc...) asparagine glycosylation sites follow: N198, N213, and N283. S285 bears the Phosphoserine mark. N-linked (GlcNAc...) asparagine glycosylation is found at N287, N309, N355, and N387. Residues 327–381 form a disordered region; that stretch reads DTKEVPNSKTQTVFPKLLGGSPHKQIPRNQSKTSSSPPALKKAVSQSKPTISGGL. Residues 353–363 show a composition bias toward polar residues; that stretch reads PRNQSKTSSSP. Intrachain disulfides connect C476/C708, C699/C779, and C812/C825. Residues 485-594 are catalytic subdomain A; that stretch reads LPTTSIIMCF…VGWLEPLLER (110 aa). Residues D526 and R555 each contribute to the substrate site. N568 is a glycosylation site (N-linked (GlcNAc...) asparagine). A Mn(2+)-binding site is contributed by D578. S579 is a substrate binding site. H580 is a Mn(2+) binding site. The segment at 654 to 716 is catalytic subdomain B; the sequence is IIRCPVMAGG…PCSRVGHIFR (63 aa). W685 serves as a coordination point for substrate. H713 is a binding site for Mn(2+). The substrate site is built by R716 and Y721. N-linked (GlcNAc...) asparagine glycans are attached at residues N766, N817, and N835. Positions 794 to 925 constitute a Ricin B-type lectin domain; it reads KAPVVRASGV…MELQQKWKFE (132 aa). 2 disulfides stabilise this stretch: C848-C863 and C898-C913. An N-linked (GlcNAc...) asparagine glycan is attached at N902.

This sequence belongs to the glycosyltransferase 2 family. GalNAc-T subfamily. In terms of assembly, interacts with EXT2. Does not interact with EXT1, EXTL1 or EXTL3. Mn(2+) serves as cofactor. As to expression, expressed at low level. Not expressed before E7.5 during embryogenesis. Expressed in dental mesenchyme and tongue. Accumulates in a subset of mesenchymal cells at the ventral-most portions of the 12.5 dpc maxilla and mandible underlying the dental lamina.

The protein resides in the golgi apparatus membrane. It carries out the reaction L-seryl-[protein] + UDP-N-acetyl-alpha-D-galactosamine = a 3-O-[N-acetyl-alpha-D-galactosaminyl]-L-seryl-[protein] + UDP + H(+). It catalyses the reaction L-threonyl-[protein] + UDP-N-acetyl-alpha-D-galactosamine = a 3-O-[N-acetyl-alpha-D-galactosaminyl]-L-threonyl-[protein] + UDP + H(+). Its pathway is protein modification; protein glycosylation. Its function is as follows. Catalyzes the initial reaction in O-linked oligosaccharide biosynthesis, the transfer of an N-acetyl-D-galactosamine residue to a serine or threonine residue on the protein receptor. Has activity toward EA2 peptide substrate, but has a weak activity toward Muc2 or Muc1b substrates. This is Polypeptide N-acetylgalactosaminyltransferase 5 (Galnt5) from Mus musculus (Mouse).